The following is an 89-amino-acid chain: Small ribosomal subunit protein uS15 (89 aa).

This sequence belongs to the universal ribosomal protein uS15 family. Part of the 30S ribosomal subunit. Forms a bridge to the 50S subunit in the 70S ribosome, contacting the 23S rRNA.

One of the primary rRNA binding proteins, it binds directly to 16S rRNA where it helps nucleate assembly of the platform of the 30S subunit by binding and bridging several RNA helices of the 16S rRNA. In terms of biological role, forms an intersubunit bridge (bridge B4) with the 23S rRNA of the 50S subunit in the ribosome. This is Small ribosomal subunit protein uS15 from Corynebacterium urealyticum (strain ATCC 43042 / DSM 7109).